The following is a 158-amino-acid chain: Putative pre-16S rRNA nuclease (158 aa).

This sequence belongs to the YqgF nuclease family.

Its subcellular location is the cytoplasm. Could be a nuclease involved in processing of the 5'-end of pre-16S rRNA. This chain is Putative pre-16S rRNA nuclease, found in Acidiphilium cryptum (strain JF-5).